Reading from the N-terminus, the 95-residue chain is Co-chaperonin GroES (95 aa).

This sequence belongs to the GroES chaperonin family. In terms of assembly, heptamer of 7 subunits arranged in a ring. Interacts with the chaperonin GroEL.

The protein localises to the cytoplasm. Its function is as follows. Together with the chaperonin GroEL, plays an essential role in assisting protein folding. The GroEL-GroES system forms a nano-cage that allows encapsulation of the non-native substrate proteins and provides a physical environment optimized to promote and accelerate protein folding. GroES binds to the apical surface of the GroEL ring, thereby capping the opening of the GroEL channel. In Ruegeria pomeroyi (strain ATCC 700808 / DSM 15171 / DSS-3) (Silicibacter pomeroyi), this protein is Co-chaperonin GroES.